The following is a 141-amino-acid chain: Hemoglobin subunit alpha-D (141 aa).

The Globin domain occupies Met1–Arg141. Heme b is bound by residues His58 and His87.

Belongs to the globin family. As to quaternary structure, heterotetramer of two alpha-D chains and two beta chains. In terms of tissue distribution, red blood cells.

Functionally, involved in oxygen transport from the lung to the various peripheral tissues. This is Hemoglobin subunit alpha-D (HBAD) from Struthio camelus (Common ostrich).